We begin with the raw amino-acid sequence, 454 residues long: MVLATPPVSKGGNAGGLFMDQYQQYAAHCETADSGNGSDLESTGLPTKPDDSEESGPSSLGSDSMHGSSTEYVRQSASQPSGQRQRQKSLRVLGALLPDSLLRDIRDRRSTEYVVQFSQPEDEEKIQVPDKIPEKPSPFRLARESLSEDKIEELRAAVERANFVQTGEETLDSIDATSQSLPASSNIGGHRGNINYKYADDQYYSFHINEHENFGARSARSGDEADHSTGAGSEAGSDSGILTEQQDLFAGYRDVRCGASSTQSTIRSAKGTVRGVKNRVRNGIATFLQLQQQPNAKNFKEKDLGKVVLYTTSMGIIRETYTKCANVKQILRTLLVKFEERDVFMSVEYQAEMRQRMQSGQVRVPQLYVEGQHIGDAETVERMNESGELRQLLKPYKSMASTYTCQTCGGYRLLPCPSCNGSKKSVHRNHFTAEFVALKCMNCDEVGLVKCHNC.

Disordered regions lie at residues 30–88 (ETAD…QRQK) and 217–239 (RSAR…GSDS). Residues 33-45 (DSGNGSDLESTGL) show a composition bias toward polar residues. Residues 58–69 (SSLGSDSMHGSS) show a composition bias toward low complexity. A compositionally biased stretch (polar residues) spans 70–84 (TEYVRQSASQPSGQR). A compositionally biased stretch (basic and acidic residues) spans 217-227 (RSARSGDEADH). Residues 295–400 (NAKNFKEKDL…QLLKPYKSMA (106 aa)) enclose the Glutaredoxin domain.

Belongs to the GRXCR1 family.

In Drosophila melanogaster (Fruit fly), this protein is Glutaredoxin domain-containing cysteine-rich protein CG31559.